A 403-amino-acid chain; its full sequence is MHNFEEELTCPICYSIFEDPRVLPCSHTFCRNCLENVLQASGNFYIWRPLRIPLKCPNCRSIIEIASTGIESLPVNFALRAIIEKYQQEDHPDVVTCPEHYRQPLNVYCLLDKKLVCGHCLTIGQHHGHPIDDLQSAYLKEKDTPQKLLKQLTDTHWTDITRLIEKLEEQKCHSEKIVQGDKEVVLQYFKELIDTLEQKKKYFLAALCDVGKMINQEYTPQIQGMKEIREQQLELMTITTSLQDESPLKFLEKIDEVRQRVQMLKQRPLPEVQPVEIYPRVSNVLKEEWSRIEIGRIKKAVIPEMRVSSKRTPCSWSDNDEKEMELFKILNIAIVSLISVILMLILLFNHHIITFLNEITSICFSEVFLSVYQSLSKNLYDLNNTVCYTLYLLKEFMWKIVSR.

The RING-type zinc finger occupies 10–60 (CPICYSIFEDPRVLPCSHTFCRNCLENVLQASGNFYIWRPLRIPLKCPNCR). The segment at 92–134 (PDVVTCPEHYRQPLNVYCLLDKKLVCGHCLTIGQHHGHPIDDL) adopts a B box-type zinc-finger fold. The Zn(2+) site is built by C97, H100, C120, and H126. The stretch at 163–246 (LIEKLEEQKC…TITTSLQDES (84 aa)) forms a coiled coil. The chain crosses the membrane as a helical span at residues 329–349 (ILNIAIVSLISVILMLILLFN).

It belongs to the TRIM/RBCC family. In terms of assembly, interacts with ECSIT. Moderately expressed in the spleen, brain and heart and very highly expressed in the testis.

It is found in the endoplasmic reticulum membrane. It catalyses the reaction S-ubiquitinyl-[E2 ubiquitin-conjugating enzyme]-L-cysteine + [acceptor protein]-L-lysine = [E2 ubiquitin-conjugating enzyme]-L-cysteine + N(6)-ubiquitinyl-[acceptor protein]-L-lysine.. It functions in the pathway protein modification; protein ubiquitination. In terms of biological role, E3 ubiquitin ligase involved in different processes such as development and immune response. Serves as a negative regulator for innate immune signaling pathways by suppressing RLR-induced activation of IRF3/7 and NF-kappa-B via interaction with adapter ECSIT. Regulates autophagy through modulating both the transcription and the ubiquitination of BECN1. On the one hand, regulates the transcription of BECN1 through negatively modulating the NF-kappa-B pathway. On the other hand, regulates TRAF6-mediated 'Lys-63'-linked ubiquitination of BECN1, thus affecting the formation of the BECN1-PIK3C3 complex. In addition, mediates 'Lys-48'-linked ubiquitination of TRAF6 and thereby promotes TRAF6 proteasomal degradation. Also acts as a critical regulator for early embryo development from blastocyst stage to gastrula through modulating F-actin assembly and WASH1 'Lys-63'-linked ubiquitination. The protein is Tripartite motif-containing protein 59 (Trim59) of Mus musculus (Mouse).